Reading from the N-terminus, the 366-residue chain is Putative neutrophil cytosol factor 1C (366 aa).

A PX domain is found at 1–101 (MYMFLVKWQD…DFFKVRPDDL (101 aa)). 2 SH3 domains span residues 132-191 (IILQ…PLDS) and 202-261 (YAGE…KSGQ). The interval 261–366 (QDVSQAQRQI…STKRKLASAV (106 aa)) is disordered. A phosphoserine mark is found at serine 279 and serine 280. Residues 285-294 (HSIHQRSRKR) are compositionally biased toward basic residues. Serine 296, serine 304, serine 321, and serine 324 each carry phosphoserine.

The protein resides in the cytoplasm. Functionally, may be required for activation of the latent NADPH oxidase (necessary for superoxide production). The protein is Putative neutrophil cytosol factor 1C (NCF1C) of Homo sapiens (Human).